The chain runs to 307 residues: Ribosomal RNA small subunit methyltransferase H (307 aa).

S-adenosyl-L-methionine contacts are provided by residues 33–35 (GGY), Asp-51, Phe-82, Asp-96, and Gln-103.

This sequence belongs to the methyltransferase superfamily. RsmH family.

It localises to the cytoplasm. It catalyses the reaction cytidine(1402) in 16S rRNA + S-adenosyl-L-methionine = N(4)-methylcytidine(1402) in 16S rRNA + S-adenosyl-L-homocysteine + H(+). In terms of biological role, specifically methylates the N4 position of cytidine in position 1402 (C1402) of 16S rRNA. The protein is Ribosomal RNA small subunit methyltransferase H of Rickettsia peacockii (strain Rustic).